The primary structure comprises 285 residues: (3S)-malyl-CoA thioesterase (285 aa).

Arginine 70 and glutamate 122 together coordinate substrate. Residues glutamate 122 and aspartate 148 each contribute to the Mg(2+) site.

It belongs to the HpcH/HpaI aldolase family. In terms of assembly, homodimer or homotrimer. It depends on Mg(2+) as a cofactor.

It carries out the reaction (S)-malyl-CoA + H2O = (S)-malate + CoA + H(+). Reversibly inhibited by EDTA. Stimulated by the divalent cations Mg(2+) and Mn(2+). In terms of biological role, catalyzes the hydrolysis of (3S)-malyl-CoA to (3S)-malate and free CoA. Inactive towards beta-methylmalyl-CoA and other CoA esters. The chain is (3S)-malyl-CoA thioesterase from Cereibacter sphaeroides (strain ATCC 17023 / DSM 158 / JCM 6121 / CCUG 31486 / LMG 2827 / NBRC 12203 / NCIMB 8253 / ATH 2.4.1.) (Rhodobacter sphaeroides).